A 145-amino-acid chain; its full sequence is Large-conductance mechanosensitive channel (145 aa).

Transmembrane regions (helical) follow at residues 14–34 and 83–103; these read VIDL…VNSL and GAFL…FLLV.

Belongs to the MscL family. Homopentamer.

The protein localises to the cell inner membrane. Functionally, channel that opens in response to stretch forces in the membrane lipid bilayer. May participate in the regulation of osmotic pressure changes within the cell. In Paracoccus denitrificans (strain Pd 1222), this protein is Large-conductance mechanosensitive channel.